Consider the following 147-residue polypeptide: Large ribosomal subunit protein uL13 (147 aa).

It belongs to the universal ribosomal protein uL13 family. In terms of assembly, part of the 50S ribosomal subunit.

In terms of biological role, this protein is one of the early assembly proteins of the 50S ribosomal subunit, although it is not seen to bind rRNA by itself. It is important during the early stages of 50S assembly. This chain is Large ribosomal subunit protein uL13, found in Pediococcus pentosaceus (strain ATCC 25745 / CCUG 21536 / LMG 10740 / 183-1w).